The following is a 300-amino-acid chain: MKSFVWTLLGALSLGSLTTAYGANASNSSVPTPDNTLVVSYTNTSCYTSGPLSPDTRFNRTTRGTFSKVRDALKFRLNGPIHHWDIANELFDTALGVEIIDTQYGINNRTSRDWCTAVSALEKGDLIEFAAAFTAFDDVNPTKEVVPDALVGTLALWAKYSYEYDLTSIVSLFGKNWTVDELGWGTYIAHSLNEISSNTTGAANATLFIDTQTKSDCYKLASTIESWKYAPLSAFPNYGPFYIYGQCVATFTSGYSPLVEPAFTFASALNTTLNSFPNGTLPTQTQVVGDIGVKFLQYFA.

The first 22 residues, 1 to 22 (MKSFVWTLLGALSLGSLTTAYG), serve as a signal peptide directing secretion.

It is found in the endoplasmic reticulum. This is an uncharacterized protein from Schizosaccharomyces pombe (strain 972 / ATCC 24843) (Fission yeast).